The following is a 341-amino-acid chain: L-threonine 3-dehydrogenase (341 aa).

Cys-38 is a Zn(2+) binding site. Active-site charge relay system residues include Thr-40 and His-43. Residues His-63, Glu-64, Cys-93, Cys-96, Cys-99, and Cys-107 each coordinate Zn(2+). Residues Ile-175, Asp-195, Arg-200, 262–264 (LGI), and 286–287 (IY) each bind NAD(+).

It belongs to the zinc-containing alcohol dehydrogenase family. As to quaternary structure, homotetramer. Zn(2+) serves as cofactor.

It localises to the cytoplasm. The enzyme catalyses L-threonine + NAD(+) = (2S)-2-amino-3-oxobutanoate + NADH + H(+). It participates in amino-acid degradation; L-threonine degradation via oxydo-reductase pathway; glycine from L-threonine: step 1/2. Its function is as follows. Catalyzes the NAD(+)-dependent oxidation of L-threonine to 2-amino-3-ketobutyrate. The polypeptide is L-threonine 3-dehydrogenase (Chromobacterium violaceum (strain ATCC 12472 / DSM 30191 / JCM 1249 / CCUG 213 / NBRC 12614 / NCIMB 9131 / NCTC 9757 / MK)).